The following is a 358-amino-acid chain: GDSL esterase/lipase At2g30220 (358 aa).

An N-terminal signal peptide occupies residues 1 to 22 (MYISKTIVFGLFVATLLVSCNA). N25 carries an N-linked (GlcNAc...) asparagine glycan. Catalysis depends on S40, which acts as the Nucleophile. 2 N-linked (GlcNAc...) asparagine glycosylation sites follow: N102 and N324. Active-site residues include D332 and H335.

It belongs to the 'GDSL' lipolytic enzyme family.

The protein resides in the secreted. The protein is GDSL esterase/lipase At2g30220 of Arabidopsis thaliana (Mouse-ear cress).